Here is a 942-residue protein sequence, read N- to C-terminus: Lon protease homolog 4, chloroplastic/mitochondrial (942 aa).

Serine 54 is subject to Phosphoserine. The 223-residue stretch at 79-301 folds into the Lon N-terminal domain; that stretch reads VIALPLPHKP…LTLELVKKEV (223 aa). 456 to 463 is a binding site for ATP; sequence GPTGVGKT. A disordered region spans residues 673–725; the sequence is ISDDVTTDTEETKSLAKTDLESPETSAEGSTVLTDELATGDPTESTTEQSGEV. Residues 682 to 692 show a composition bias toward basic and acidic residues; it reads EETKSLAKTDL. Residues 695-705 are compositionally biased toward polar residues; sequence PETSAEGSTVL. The 185-residue stretch at 756–940 folds into the Lon proteolytic domain; sequence QTPVGVVMGL…EQIFELAFGY (185 aa). Catalysis depends on residues serine 846 and lysine 889.

It belongs to the peptidase S16 family. In terms of assembly, homohexamer or homoheptamer. Organized in a ring with a central cavity.

The protein localises to the mitochondrion matrix. It is found in the plastid. The protein resides in the chloroplast thylakoid membrane. The catalysed reaction is Hydrolysis of proteins in presence of ATP.. In terms of biological role, ATP-dependent serine protease that mediates the selective degradation of misfolded, unassembled or oxidatively damaged polypeptides as well as certain short-lived regulatory proteins in the mitochondrial matrix. May also have a chaperone function in the assembly of inner membrane protein complexes. Participates in the regulation of mitochondrial gene expression and in the maintenance of the integrity of the mitochondrial genome. Binds to mitochondrial DNA in a site-specific manner. This is Lon protease homolog 4, chloroplastic/mitochondrial (LON4) from Arabidopsis thaliana (Mouse-ear cress).